The primary structure comprises 476 residues: Bifunctional protein HldE (476 aa).

The ribokinase stretch occupies residues M1–S319. An ATP-binding site is contributed by N195 to E198. Residue D264 is part of the active site. The cytidylyltransferase stretch occupies residues M345 to Q476.

The protein in the N-terminal section; belongs to the carbohydrate kinase PfkB family. In the C-terminal section; belongs to the cytidylyltransferase family. As to quaternary structure, homodimer.

The catalysed reaction is D-glycero-beta-D-manno-heptose 7-phosphate + ATP = D-glycero-beta-D-manno-heptose 1,7-bisphosphate + ADP + H(+). It catalyses the reaction D-glycero-beta-D-manno-heptose 1-phosphate + ATP + H(+) = ADP-D-glycero-beta-D-manno-heptose + diphosphate. It participates in nucleotide-sugar biosynthesis; ADP-L-glycero-beta-D-manno-heptose biosynthesis; ADP-L-glycero-beta-D-manno-heptose from D-glycero-beta-D-manno-heptose 7-phosphate: step 1/4. The protein operates within nucleotide-sugar biosynthesis; ADP-L-glycero-beta-D-manno-heptose biosynthesis; ADP-L-glycero-beta-D-manno-heptose from D-glycero-beta-D-manno-heptose 7-phosphate: step 3/4. Catalyzes the phosphorylation of D-glycero-D-manno-heptose 7-phosphate at the C-1 position to selectively form D-glycero-beta-D-manno-heptose-1,7-bisphosphate. Functionally, catalyzes the ADP transfer from ATP to D-glycero-beta-D-manno-heptose 1-phosphate, yielding ADP-D-glycero-beta-D-manno-heptose. The chain is Bifunctional protein HldE from Shewanella putrefaciens (strain CN-32 / ATCC BAA-453).